Reading from the N-terminus, the 277-residue chain is Putative thiosulfate sulfurtransferase (277 aa).

Rhodanese domains lie at 18–125 and 154–274; these read KAPK…PLSA and AIGT…APIE. Lysine 67 is covalently cross-linked (Isoglutamyl lysine isopeptide (Lys-Gln) (interchain with Q-Cter in protein Pup)). Cysteine 233 serves as the catalytic Cysteine persulfide intermediate. Substrate is bound at residue arginine 238.

It carries out the reaction thiosulfate + hydrogen cyanide = thiocyanate + sulfite + 2 H(+). Functionally, may be a sulfotransferase involved in the formation of thiosulfate. The polypeptide is Putative thiosulfate sulfurtransferase (Mycolicibacterium smegmatis (strain ATCC 700084 / mc(2)155) (Mycobacterium smegmatis)).